A 97-amino-acid polypeptide reads, in one-letter code: YcgL domain-containing protein Psyr_1564 (97 aa).

In terms of domain architecture, YcgL spans 3-87 (RICSIYRSPK…AEDDYIEHLP (85 aa)).

In Pseudomonas syringae pv. syringae (strain B728a), this protein is YcgL domain-containing protein Psyr_1564.